Here is a 422-residue protein sequence, read N- to C-terminus: UDP-N-acetylglucosamine 1-carboxyvinyltransferase (422 aa).

22–23 (KN) is a phosphoenolpyruvate binding site. Arg94 is a UDP-N-acetyl-alpha-D-glucosamine binding site. Cys118 acts as the Proton donor in catalysis. 2-(S-cysteinyl)pyruvic acid O-phosphothioketal is present on Cys118. UDP-N-acetyl-alpha-D-glucosamine contacts are provided by residues 123–127 (RPVDL), Asp309, and Ile331.

The protein belongs to the EPSP synthase family. MurA subfamily.

Its subcellular location is the cytoplasm. The catalysed reaction is phosphoenolpyruvate + UDP-N-acetyl-alpha-D-glucosamine = UDP-N-acetyl-3-O-(1-carboxyvinyl)-alpha-D-glucosamine + phosphate. It participates in cell wall biogenesis; peptidoglycan biosynthesis. Functionally, cell wall formation. Adds enolpyruvyl to UDP-N-acetylglucosamine. The protein is UDP-N-acetylglucosamine 1-carboxyvinyltransferase of Cereibacter sphaeroides (strain ATCC 17025 / ATH 2.4.3) (Rhodobacter sphaeroides).